The following is a 105-amino-acid chain: MAKISSPTETERCIESLIAVFQKYAGKDGYNYTLSKTEFLSFMNTELAAFTKNQKDPGVLDRMMKKLDTNSDGQLDFSEFLNLIGGLAMACHDSFLKAVPSQKRT.

Position 1 is an N-acetylmethionine (methionine 1). Residue alanine 2 is modified to N-acetylalanine; in Protein S100-A11, N-terminally processed. Lysine 3 is subject to N6-acetyllysine. A phosphoserine mark is found at serine 5 and serine 6. A Phosphothreonine modification is found at threonine 10. EF-hand domains lie at 13 to 49 (CIES…ELAA) and 55 to 90 (KDPG…LAMA). An N6-acetyllysine modification is found at lysine 27. Residues threonine 33, glutamate 38, aspartate 68, asparagine 70, aspartate 72, glutamine 74, and glutamate 79 each contribute to the Ca(2+) site.

This sequence belongs to the S-100 family. Homodimer; disulfide-linked. Phosphorylation at Thr-10 by PRKCA significantly suppresses homodimerization and promotes association with NCL/nucleolin which induces nuclear translocation.

It is found in the cytoplasm. The protein resides in the nucleus. In terms of biological role, facilitates the differentiation and the cornification of keratinocytes. The chain is Protein S100-A11 (S100A11) from Homo sapiens (Human).